The following is a 242-amino-acid chain: MGTNYRRVLLKLSGEALMGNMGYGIDPEVVKEIAQEIAEVIATGVQIAIVVGGGNIFRGVKAASAGMDRATADYIGMIATVMNAMTLQDSLERIGVQTRVQTAIAMQELAEPYIRRRAIRHLEKGRVVIFGAGSGNPFFTTDTTAALRAAEIDAEVIFKATKVDGVYDADPEVYPNAKRYNSLTYAHVLAQDLRVMDSTAIALCKENNIPILVFDLTTRGNIRRAVLGESIGTLVGGSCEIS.

11 to 14 (KLSG) is a binding site for ATP. Positions 19–24 (GNMGYG) are involved in allosteric activation by GTP. Gly53 contacts UMP. The ATP site is built by Gly54 and Arg58. UMP contacts are provided by residues Asp73 and 134–141 (SGNPFFTT). Residues Thr161, Tyr167, and Asp170 each coordinate ATP.

This sequence belongs to the UMP kinase family. In terms of assembly, homohexamer.

Its subcellular location is the cytoplasm. The catalysed reaction is UMP + ATP = UDP + ADP. The protein operates within pyrimidine metabolism; CTP biosynthesis via de novo pathway; UDP from UMP (UMPK route): step 1/1. Allosterically activated by GTP. Inhibited by UTP. In terms of biological role, catalyzes the reversible phosphorylation of UMP to UDP. The chain is Uridylate kinase from Trichormus variabilis (strain ATCC 29413 / PCC 7937) (Anabaena variabilis).